We begin with the raw amino-acid sequence, 341 residues long: tRNA uridine(34) hydroxylase (341 aa).

One can recognise a Rhodanese domain in the interval 139 to 233 (SDPEVVLVDT…YLEEVPSTET (95 aa)). The Cysteine persulfide intermediate role is filled by Cys-193. 2 stretches are compositionally biased toward basic and acidic residues: residues 306-316 (SLAEERGESHI) and 324-341 (IEER…QANK). The interval 306-341 (SLAEERGESHIGGDIQNIIEERRQEKNDKKAKQANK) is disordered.

It belongs to the TrhO family.

It carries out the reaction uridine(34) in tRNA + AH2 + O2 = 5-hydroxyuridine(34) in tRNA + A + H2O. In terms of biological role, catalyzes oxygen-dependent 5-hydroxyuridine (ho5U) modification at position 34 in tRNAs. The polypeptide is tRNA uridine(34) hydroxylase (Colwellia psychrerythraea (strain 34H / ATCC BAA-681) (Vibrio psychroerythus)).